Reading from the N-terminus, the 95-residue chain is Large ribosomal subunit protein bL28 (95 aa).

The protein belongs to the bacterial ribosomal protein bL28 family.

The sequence is that of Large ribosomal subunit protein bL28 from Orientia tsutsugamushi (strain Ikeda) (Rickettsia tsutsugamushi).